The chain runs to 477 residues: ATP synthase subunit beta (477 aa).

Position 163–170 (163–170) interacts with ATP; that stretch reads GGAGVGKT.

This sequence belongs to the ATPase alpha/beta chains family. In terms of assembly, F-type ATPases have 2 components, CF(1) - the catalytic core - and CF(0) - the membrane proton channel. CF(1) has five subunits: alpha(3), beta(3), gamma(1), delta(1), epsilon(1). CF(0) has four main subunits: a(1), b(1), b'(1) and c(9-12).

Its subcellular location is the cellular thylakoid membrane. It catalyses the reaction ATP + H2O + 4 H(+)(in) = ADP + phosphate + 5 H(+)(out). Its function is as follows. Produces ATP from ADP in the presence of a proton gradient across the membrane. The catalytic sites are hosted primarily by the beta subunits. This chain is ATP synthase subunit beta, found in Synechococcus sp. (strain JA-2-3B'a(2-13)) (Cyanobacteria bacterium Yellowstone B-Prime).